The chain runs to 860 residues: Protein translocase subunit SecA (860 aa).

ATP-binding positions include glutamine 87, 105-109 (GEGKT), and aspartate 514. Zn(2+) contacts are provided by cysteine 846, cysteine 848, cysteine 857, and cysteine 858.

This sequence belongs to the SecA family. As to quaternary structure, monomer and homodimer. Part of the essential Sec protein translocation apparatus which comprises SecA, SecYEG and auxiliary proteins SecDF. Other proteins may also be involved. The cofactor is Zn(2+).

The protein localises to the cell membrane. It localises to the cytoplasm. It catalyses the reaction ATP + H2O + cellular proteinSide 1 = ADP + phosphate + cellular proteinSide 2.. Its function is as follows. Part of the Sec protein translocase complex. Interacts with the SecYEG preprotein conducting channel. Has a central role in coupling the hydrolysis of ATP to the transfer of proteins into and across the cell membrane, serving as an ATP-driven molecular motor driving the stepwise translocation of polypeptide chains across the membrane. The polypeptide is Protein translocase subunit SecA (Endomicrobium trichonymphae).